The sequence spans 206 residues: dCTP deaminase, dUMP-forming (206 aa).

Residues 117–122 (RSSFGR), Asp135, 143–145 (TLE), Gln163, Tyr177, Lys184, and Gln188 contribute to the dCTP site. Glu145 (proton donor/acceptor) is an active-site residue.

The protein belongs to the dCTP deaminase family. Homotrimer.

It catalyses the reaction dCTP + 2 H2O = dUMP + NH4(+) + diphosphate. It functions in the pathway pyrimidine metabolism; dUMP biosynthesis; dUMP from dCTP: step 1/1. Its function is as follows. Bifunctional enzyme that catalyzes both the deamination of dCTP to dUTP and the hydrolysis of dUTP to dUMP without releasing the toxic dUTP intermediate. This chain is dCTP deaminase, dUMP-forming, found in Methanococcus maripaludis (strain C7 / ATCC BAA-1331).